The sequence spans 288 residues: Eukaryotic translation initiation factor 3 subunit F-2 (288 aa).

Positions 12 to 149 constitute an MPN domain; that stretch reads VLLHPLVLFQ…TRIFCAVATG (138 aa).

Belongs to the eIF-3 subunit F family. As to quaternary structure, component of the eukaryotic translation initiation factor 3 (eIF-3) complex. The eIF-3 complex interacts with pix.

It is found in the cytoplasm. Component of the eukaryotic translation initiation factor 3 (eIF-3) complex, which is involved in protein synthesis of a specialized repertoire of mRNAs and, together with other initiation factors, stimulates binding of mRNA and methionyl-tRNAi to the 40S ribosome. The eIF-3 complex specifically targets and initiates translation of a subset of mRNAs involved in cell proliferation. The chain is Eukaryotic translation initiation factor 3 subunit F-2 from Drosophila persimilis (Fruit fly).